The chain runs to 103 residues: NADH-quinone oxidoreductase subunit K 1 (103 aa).

Transmembrane regions (helical) follow at residues 7–27 (ISWF…GFLF), 31–51 (IITV…SFVT), and 63–83 (LFTF…LAII).

It belongs to the complex I subunit 4L family. NDH-1 is composed of 14 different subunits. Subunits NuoA, H, J, K, L, M, N constitute the membrane sector of the complex.

The protein localises to the cell inner membrane. The catalysed reaction is a quinone + NADH + 5 H(+)(in) = a quinol + NAD(+) + 4 H(+)(out). Its function is as follows. NDH-1 shuttles electrons from NADH, via FMN and iron-sulfur (Fe-S) centers, to quinones in the respiratory chain. The immediate electron acceptor for the enzyme in this species is believed to be ubiquinone. Couples the redox reaction to proton translocation (for every two electrons transferred, four hydrogen ions are translocated across the cytoplasmic membrane), and thus conserves the redox energy in a proton gradient. This is NADH-quinone oxidoreductase subunit K 1 from Solibacter usitatus (strain Ellin6076).